A 453-amino-acid chain; its full sequence is Protein LIAT1 (453 aa).

A disordered region spans residues 1-152 (METRGPGLAV…HLPSDSSTVS (152 aa)). Residues 82–103 (KRKVKKKKRKKKTKGSGKGDDK) are lysine-rich domain. Residues 83 to 96 (RKVKKKKRKKKTKG) show a composition bias toward basic residues. A compositionally biased stretch (low complexity) spans 106 to 117 (SQSLKSQPLSSS). A compositionally biased stretch (basic and acidic residues) spans 125–145 (CKERGPKPEHRQSKVEKKHLP). An interaction with ATE1 region spans residues 145-197 (PSDSSTVSLPDFAEIENLANRINESLRWDGILADPEAEKERIRIYKLNRRKRY). 20 consecutive repeat copies span residues 201–210 (ALKGFHPDPE), 211–220 (ALKGFHPDPD), 221–230 (ALKGFHPDPE), 231–240 (ALKGFHPDPE), 241–250 (ALKGFHPDPE), 251–260 (ALKGFHPDPE), 261–270 (ALKGIHPDPE), 271–280 (ALKGIHPDPE), 281–290 (ALKGFHPDPE), 291–300 (ALKGFHPDPE), 301–310 (ALKGFHTDPE), 311–320 (ALKGFHIDPE), 321–330 (ALKGFHPDPK), 331–340 (ALKGFHPDPK), 341–350 (ALKGFHTDPE), 351–360 (ALKGFHPDPK), 361–370 (ALKGFHPDPE), 371–380 (ALKGFHPDPE), 381–390 (ALKGFHPDPE), and 391–400 (ALKGFHTDPN). The 20 X 10 AA approximate tandem repeat of A-L-K-G-F-H-P-D-P-E stretch occupies residues 201 to 400 (ALKGFHPDPE…ALKGFHTDPN (200 aa)). Disordered stretches follow at residues 225–306 (FHPD…KGFH) and 320–432 (EALK…CPNL). Residues 320–396 (EALKGFHPDP…PDPEALKGFH (77 aa)) are compositionally biased toward basic and acidic residues.

As to quaternary structure, self-associates (via Lys-rich domain); targets LIAT1 to the nucleolus. Interacts with ATE1; it is not a substrate of ATE1, the interaction takes place in the cytoplasm and seems to increase ATE1 arginyltransferase activity. Interacts with JMJD6 and MRPS14. Post-translationally, post-translationally modified by JMJD6 lysyl-hydroxylase activity at its Lys-rich domain, which inhibits its self-association and nucleolar localization.

The protein localises to the nucleus. The protein resides in the nucleolus. It is found in the cytoplasm. Functionally, participates in nucleolar liquid-liquid phase separation (LLPS) through its N-terminal intrinsically disordered region (IDR). May be involved in ATE1-mediated N-terminal arginylation. The chain is Protein LIAT1 from Homo sapiens (Human).